Reading from the N-terminus, the 176-residue chain is RNA polymerase sigma factor SigZ (176 aa).

Residues 30–43 (DLLQIVFMKIQVHL) carry the Polymerase core binding motif. Residues 125–144 (QKELSEKLGISYSGAKSRVQ) constitute a DNA-binding region (H-T-H motif).

It belongs to the sigma-70 factor family. ECF subfamily.

Sigma factors are initiation factors that promote the attachment of RNA polymerase to specific initiation sites and are then released. The polypeptide is RNA polymerase sigma factor SigZ (sigZ) (Bacillus subtilis (strain 168)).